Consider the following 325-residue polypeptide: MAEYQNIFTRVQVAGPAHMGVPLPEQDSPRTGKKPWQIHLLGRLGMAQIGPIYLGPLGILSIVFGSLAIMIIGFNMLASVGWNPIEFFRQFFWLALEPPSPKYGLKLPPLNDGGWWLMAGLFLTISILLWWVRMYTRARALGMGTHVAWAFAAAIWLYLVLGFIRPVLMGSWSEAVPFGIFPHLDWTAAFSLRYGNLFYNPFHALSIAFLYGATLLFAMHGATILAVSRFGGERELEQIADRGTASERAQLFWRWTMGFNATTESIHRWAWWFAVLCPLCGGIGILLSGTVVDNWYLWAVKHGVAPSYPAVFAPTIDPATLQGVK.

3 helical membrane passes run 54 to 80, 111 to 140, and 143 to 168; these read LGPLGILSIVFGSLAIMIIGFNMLASV, NDGGWWLMAGLFLTISILLWWVRMYTRARA, and MGTHVAWAFAAAIWLYLVLGFIRPVL. His183 and His203 together coordinate (7R,8Z)-bacteriochlorophyll b. A helical membrane pass occupies residues 198-226; it reads FYNPFHALSIAFLYGATLLFAMHGATILA. Fe cation contacts are provided by His220 and Glu235. A ubiquinone is bound at residue Trp253. The chain crosses the membrane as a helical span at residues 260–286; it reads NATTESIHRWAWWFAVLCPLCGGIGIL. His267 contacts Fe cation.

This sequence belongs to the reaction center PufL/M/PsbA/D family. As to quaternary structure, reaction center is composed of four bacteriochlorophylls, two bacteriopheophytins, two ubiquinones, one iron, and three highly hydrophobic polypeptide chains (designated L, M, and H).

It localises to the cell inner membrane. Functionally, the reaction center is a membrane-bound complex that mediates the initial photochemical event in the electron transfer process of photosynthesis. The polypeptide is Reaction center protein M chain (pufM) (Rubrivivax gelatinosus (strain NBRC 100245 / IL144)).